The primary structure comprises 261 residues: Ribosomal RNA small subunit methyltransferase J (261 aa).

S-adenosyl-L-methionine-binding positions include 129 to 130 (ER) and D182.

The protein belongs to the methyltransferase superfamily. RsmJ family.

It localises to the cytoplasm. The catalysed reaction is guanosine(1516) in 16S rRNA + S-adenosyl-L-methionine = N(2)-methylguanosine(1516) in 16S rRNA + S-adenosyl-L-homocysteine + H(+). In terms of biological role, specifically methylates the guanosine in position 1516 of 16S rRNA. The polypeptide is Ribosomal RNA small subunit methyltransferase J (Desulfotalea psychrophila (strain LSv54 / DSM 12343)).